The following is a 1030-amino-acid chain: MAAAAALEAVAPLGTLWGLVQDFVMGQQEGPADQVAADVKSGSYTVLQVVEALGSSLENPEPRTRARGIQLLSQVLLQCHSLLLEKEVVHLILFYENRLKDHHLVIPSVLQGLRALSLCVTLPPGLAVSVLKAIFQEVHVQSLPQVDRHTVYSIITNFMRAREEELKGLGADFTFGFIQVMDGEKDPRNLLVAFHIVYDLISRDYSLGPFVEELFEVTSCYFPIDFTPPPNDPHGIQREDLILSLRAVLASTPRFAEFLLPLLIEKVDSEILSAKLDSLQTLNACCAVYGQKELKDFLPSLWASIRREVFQTASERVEAEGLAALNSLTACLSRSVLRADAEDLLDSFLSNILQDCRHHLCEPDMKLVWPSAKLLQAAAGASARACDHVTSNVLPLLLEQFHKHSQSNQRRTILEMILGFLKLQQKWSYEDKDERPLSGFKDQLCSLMFMALTDPNTQLQLVGIRTLTVLGAQPDLLSSGDLELAVGHLYRLSFLEEDSQSCRVAALEASGTLATLYPMAFSSHLVPRLAEDLCTEESDLARADGPTRCSRHPRCLQALSAISTHPSIVKETLPLLLQHLCQMNRGSVSPGTSEVIAVCQSLQQVAENCQRDPESCWYFHQTAVPCLLALVVQASAPEKEHSVLKKVLLEDEVLATMASVIATATTHLSPDLASQSVAHIVPLFLDGNISFLPENSFSGRFQPFQDGSSGQRRLVALLMAFVCSLPRNVEIPQLNRLMGELLELSCCQSCPFSSTAAAKCFAGLLNKHPAGQQLDEFLQLAVDKVEAGLSSGPCRSQAFTLLLWVTKALVLRYHPLSSCLTERLMGLLSDPELGPAAADGFSLLMSDCTDVLTRAGHAEVRIMFRQRFFTDNVPALVRGFHAAPQDVKPNYLKGLSHVLNRLPKPVLLPELPTLLSLLLEALSCPDSVVQLSTLSCLQPLLLEAPQVMSLHVDTLITKFLNLSASPSMAVRIAALQCMHALTRLPTPVLLPYKPQVIRALAKPLDDKKRLVRKEAVSARGEWFLLGSPGS.

At Ala2 the chain carries N-acetylalanine. 4 HEAT repeats span residues 866–904 (QRFF…RLPK), 908–946 (LPEL…EAPQ), 949–987 (SLHV…LPTP), and 990–1028 (LPYK…LGSP). Phosphoserine is present on Ser1027.

Belongs to the MET18/MMS19 family. Component of the CIA complex. In the CIA complex, interacts directly with CIAO2B and CIAO3. Component of the MMXD complex, composed of CIAO1, ERCC2, CIAO2B, MMS19 and SLC25A5. Interacts with CIAO2B; the interaction is direct. Interacts with ERCC2/XPD; the interaction is direct. Interacts with ERCC3/XPB and NCOA3/RAC3. Interacts with RTEL1; the interaction mediates the association of RTEL1 with the CIA complex. Interacts with BRIP1. Interacts with KIF4A; the interaction facilitates the transfer of Fe-S clusters to KIF4A to ensure proper localization of KIF4A to the mitotic machinery components. Interacts with CCDC117; the interaction is indirect. In terms of processing, ubiquitinated; undergoes 'Lys-48'-linked polyubiquitination.

The protein localises to the nucleus. Its subcellular location is the cytoplasm. The protein resides in the cytoskeleton. It localises to the spindle. Its function is as follows. Key component of the cytosolic iron-sulfur protein assembly (CIA) complex, a multiprotein complex that mediates the incorporation of iron-sulfur cluster into apoproteins specifically involved in DNA metabolism and genomic integrity. In the CIA complex, MMS19 acts as an adapter between early-acting CIA components and a subset of cellular target Fe/S proteins such as ERCC2/XPD, FANCJ and RTEL1, thereby playing a key role in nucleotide excision repair (NER), homologous recombination-mediated double-strand break DNA repair, DNA replication and RNA polymerase II (POL II) transcription. As a CIA complex component and in collaboration with CIAO1 and CIAO2, binds to and facilitates the assembly of most cytosolic-nuclear Fe/S proteins. As part of the mitotic spindle-associated MMXD complex, plays a role in chromosome segregation, probably by facilitating iron-sulfur cluster assembly into ERCC2/XPD. Together with CIAO2, facilitates the transfer of Fe-S clusters to the motor protein KIF4A, which ensures proper localization of KIF4A to mitotic machinery components to promote the progression of mitosis. Indirectly acts as a transcriptional coactivator of estrogen receptor (ER), via its role in iron-sulfur insertion into some component of the TFIIH-machinery. The chain is MMS19 nucleotide excision repair protein homolog from Bos taurus (Bovine).